A 33-amino-acid polypeptide reads, in one-letter code: Pardaxin P-2 (33 aa).

The protein belongs to the pardaxin family. In terms of assembly, in aqueous solution exists as a tetramer.

The protein localises to the secreted. It localises to the target cell membrane. Functionally, exhibits unusual shark repellent and surfactant properties. Forms voltage-dependent, ion-permeable channels in membranes. At high concentration causes cell membrane lysis. The protein is Pardaxin P-2 of Pardachirus pavoninus (Peacock sole).